A 401-amino-acid polypeptide reads, in one-letter code: Acetate kinase (401 aa).

N7 contributes to the Mg(2+) binding site. K14 contacts ATP. Residue R90 participates in substrate binding. The active-site Proton donor/acceptor is the D147. ATP is bound by residues 207–211, 282–284, and 331–335; these read HMGNG, DMR, and GIGEN. E385 serves as a coordination point for Mg(2+).

This sequence belongs to the acetokinase family. As to quaternary structure, homodimer. Mg(2+) serves as cofactor. The cofactor is Mn(2+).

Its subcellular location is the cytoplasm. It catalyses the reaction acetate + ATP = acetyl phosphate + ADP. Its pathway is metabolic intermediate biosynthesis; acetyl-CoA biosynthesis; acetyl-CoA from acetate: step 1/2. Functionally, catalyzes the formation of acetyl phosphate from acetate and ATP. Can also catalyze the reverse reaction. The protein is Acetate kinase of Clostridium acetobutylicum (strain ATCC 824 / DSM 792 / JCM 1419 / IAM 19013 / LMG 5710 / NBRC 13948 / NRRL B-527 / VKM B-1787 / 2291 / W).